The sequence spans 102 residues: Large ribosomal subunit protein bL21 (102 aa).

Over residues 79 to 91 (RKDSKRKKGHRQP) the composition is skewed to basic residues. The tract at residues 79–102 (RKDSKRKKGHRQPYTKLTIDKINA) is disordered.

This sequence belongs to the bacterial ribosomal protein bL21 family. As to quaternary structure, part of the 50S ribosomal subunit. Contacts protein L20.

In terms of biological role, this protein binds to 23S rRNA in the presence of protein L20. This is Large ribosomal subunit protein bL21 from Staphylococcus saprophyticus subsp. saprophyticus (strain ATCC 15305 / DSM 20229 / NCIMB 8711 / NCTC 7292 / S-41).